The chain runs to 65 residues: Large ribosomal subunit protein bL35 (65 aa).

The tract at residues 1 to 65 (MPKIKTNRAA…GRLDRMLPYL (65 aa)) is disordered. Residues 10–44 (AAKRFRKTASGKYKAGHANRSHILTKKATKRKRNL) are compositionally biased toward basic residues. Residues 50 to 65 (VRAEDAGRLDRMLPYL) show a composition bias toward basic and acidic residues.

This sequence belongs to the bacterial ribosomal protein bL35 family.

The protein is Large ribosomal subunit protein bL35 of Xylella fastidiosa (strain M23).